Here is a 597-residue protein sequence, read N- to C-terminus: Arginine--tRNA ligase (597 aa).

Positions 125–135 (PNTNKPLHLGH) match the 'HIGH' region motif.

Belongs to the class-I aminoacyl-tRNA synthetase family. As to quaternary structure, monomer.

The protein localises to the cytoplasm. The enzyme catalyses tRNA(Arg) + L-arginine + ATP = L-arginyl-tRNA(Arg) + AMP + diphosphate. The chain is Arginine--tRNA ligase from Porphyromonas gingivalis (strain ATCC 33277 / DSM 20709 / CIP 103683 / JCM 12257 / NCTC 11834 / 2561).